The following is a 72-amino-acid chain: Translation initiation factor IF-1 (72 aa).

The region spanning 1–72 is the S1-like domain; it reads MAKDDVIEVE…TRGRITYRFK (72 aa).

Belongs to the IF-1 family. In terms of assembly, component of the 30S ribosomal translation pre-initiation complex which assembles on the 30S ribosome in the order IF-2 and IF-3, IF-1 and N-formylmethionyl-tRNA(fMet); mRNA recruitment can occur at any time during PIC assembly.

It is found in the cytoplasm. Functionally, one of the essential components for the initiation of protein synthesis. Stabilizes the binding of IF-2 and IF-3 on the 30S subunit to which N-formylmethionyl-tRNA(fMet) subsequently binds. Helps modulate mRNA selection, yielding the 30S pre-initiation complex (PIC). Upon addition of the 50S ribosomal subunit IF-1, IF-2 and IF-3 are released leaving the mature 70S translation initiation complex. The protein is Translation initiation factor IF-1 of Streptococcus pneumoniae serotype 2 (strain D39 / NCTC 7466).